A 304-amino-acid chain; its full sequence is Lipoyl synthase (304 aa).

The tract at residues 1–21 (MAPELIQIDLEPRKPAPKPSW) is disordered. Residues cysteine 48, cysteine 53, cysteine 59, cysteine 74, cysteine 78, cysteine 81, and serine 287 each contribute to the [4Fe-4S] cluster site. The 217-residue stretch at 60-276 (WNHKTATFML…KEEAMKMGFR (217 aa)) folds into the Radical SAM core domain.

The protein belongs to the radical SAM superfamily. Lipoyl synthase family. The cofactor is [4Fe-4S] cluster.

Its subcellular location is the cytoplasm. The enzyme catalyses [[Fe-S] cluster scaffold protein carrying a second [4Fe-4S](2+) cluster] + N(6)-octanoyl-L-lysyl-[protein] + 2 oxidized [2Fe-2S]-[ferredoxin] + 2 S-adenosyl-L-methionine + 4 H(+) = [[Fe-S] cluster scaffold protein] + N(6)-[(R)-dihydrolipoyl]-L-lysyl-[protein] + 4 Fe(3+) + 2 hydrogen sulfide + 2 5'-deoxyadenosine + 2 L-methionine + 2 reduced [2Fe-2S]-[ferredoxin]. It functions in the pathway protein modification; protein lipoylation via endogenous pathway; protein N(6)-(lipoyl)lysine from octanoyl-[acyl-carrier-protein]: step 2/2. Catalyzes the radical-mediated insertion of two sulfur atoms into the C-6 and C-8 positions of the octanoyl moiety bound to the lipoyl domains of lipoate-dependent enzymes, thereby converting the octanoylated domains into lipoylated derivatives. This chain is Lipoyl synthase, found in Koribacter versatilis (strain Ellin345).